A 121-amino-acid polypeptide reads, in one-letter code: Chorion class A proteins Ld9 (121 aa).

It belongs to the chorion protein family.

This protein is one of many from the eggshell of the gypsy moth. In Lymantria dispar (Gypsy moth), this protein is Chorion class A proteins Ld9.